We begin with the raw amino-acid sequence, 367 residues long: Alanine racemase (367 aa).

The Proton acceptor; specific for D-alanine role is filled by lysine 40. Position 40 is an N6-(pyridoxal phosphate)lysine (lysine 40). Arginine 136 serves as a coordination point for substrate. Residue tyrosine 263 is the Proton acceptor; specific for L-alanine of the active site. Methionine 310 is a binding site for substrate.

Belongs to the alanine racemase family. It depends on pyridoxal 5'-phosphate as a cofactor.

It carries out the reaction L-alanine = D-alanine. It participates in amino-acid biosynthesis; D-alanine biosynthesis; D-alanine from L-alanine: step 1/1. Functionally, catalyzes the interconversion of L-alanine and D-alanine. May also act on other amino acids. In Lactococcus lactis subsp. lactis (strain IL1403) (Streptococcus lactis), this protein is Alanine racemase (alr).